Here is a 315-residue protein sequence, read N- to C-terminus: GTP cyclohydrolase MptA (315 aa).

The protein belongs to the GTP cyclohydrolase IV family. In terms of assembly, homodimer. Fe(2+) serves as cofactor.

The enzyme catalyses GTP + H2O = 7,8-dihydroneopterin 2',3'-cyclic phosphate + formate + diphosphate + H(+). Its pathway is cofactor biosynthesis; 5,6,7,8-tetrahydromethanopterin biosynthesis. In terms of biological role, converts GTP to 7,8-dihydro-D-neopterin 2',3'-cyclic phosphate, the first intermediate in the biosynthesis of coenzyme methanopterin. This Methanococcus maripaludis (strain C6 / ATCC BAA-1332) protein is GTP cyclohydrolase MptA.